The chain runs to 380 residues: Serpin B7 (380 aa).

Residue S217 is modified to Phosphoserine.

This sequence belongs to the serpin family. Ov-serpin subfamily.

The protein resides in the cytoplasm. In terms of biological role, might function as an inhibitor of Lys-specific proteases. Might influence the maturation of megakaryocytes via its action as a serpin. This is Serpin B7 (Serpinb7) from Mus musculus (Mouse).